Reading from the N-terminus, the 253-residue chain is Complement C1q subcomponent subunit B (253 aa).

The first 27 residues, 1-27 (MMMKIPWGSIPVLMLLLLLGLIDISQA), serve as a signal peptide directing secretion. Position 28 is a pyrrolidone carboxylic acid (Gln28). Residues Pro35, Pro38, Pro41, Pro53, and Pro56 each carry the 4-hydroxyproline modification. 2 consecutive Collagen-like domains span residues 37-86 (IPGI…PGNP) and 60-114 (GEKG…GESG). A disordered region spans residues 38–115 (PGIPGIPGTP…APGPKGESGD (78 aa)). 5-hydroxylysine is present on residues Lys59 and Lys62. The residue at position 65 (Pro65) is a 4-hydroxyproline. The segment covering 70–79 (DHGEFGEKGD) has biased composition (basic and acidic residues). 5-hydroxylysine is present on Lys77. Low complexity predominate over residues 80-92 (PGIPGNPGKVGPK). 2 positions are modified to 4-hydroxyproline: Pro83 and Pro86. 2 positions are modified to 5-hydroxylysine: Lys92 and Lys98. Residues 96 to 105 (GPKGGPGAPG) show a composition bias toward gly residues. Residues Pro101, Pro104, and Pro107 each carry the 4-hydroxyproline modification. A 5-hydroxylysine modification is found at Lys110. The C1q domain maps to 117–253 (KATQKIAFSA…GFLLFPDMEA (137 aa)). A disulfide bridge links Cys181 with Cys198. Positions 199, 200, and 206 each coordinate Ca(2+).

Core component of the complement C1 complex, a calcium-dependent complex composed of 1 molecule of the C1Q subcomplex, 2 molecules of C1R and 2 molecules of C1S. The C1Q subcomplex is composed 18 subunits: 3 chains of C1QA, C1QB, and C1QC trimerize to form 6 collagen-like triple helices connected to six globular ligand-recognition modules (C1q domain). In terms of processing, hydroxylated on lysine and proline residues. Hydroxylated lysine residues can be glycosylated. Human C1Q contains up to 68.3 hydroxylysine-galactosylglucose residues and up to 2.5 hydroxylysine-galactose per molecule. Total percentage hydroxylysine residues glycosylated is 86.4%.

The protein localises to the secreted. It localises to the cell surface. Its activity is regulated as follows. The C1Q subcomplex is inhibited by sulfated molecules, such as triterpenoid sulfates, heparan sulfate, or chondroitin sulfates. Its function is as follows. Core component of the complement C1 complex, a multiprotein complex that initiates the classical pathway of the complement system, a cascade of proteins that leads to phagocytosis and breakdown of pathogens and signaling that strengthens the adaptive immune system. The classical complement pathway is initiated by the C1Q subcomplex of the C1 complex, which specifically binds IgG or IgM immunoglobulins complexed with antigens, forming antigen-antibody complexes on the surface of pathogens: C1QA, together with C1QB and C1QC, specifically recognizes and binds the Fc regions of IgG or IgM via its C1q domain. Immunoglobulin-binding activates the proenzyme C1R, which cleaves C1S, initiating the proteolytic cascade of the complement system. The C1Q subcomplex is activated by a hexamer of IgG complexed with antigens, while it is activated by a pentameric IgM. The C1Q subcomplex also recognizes and binds phosphatidylserine exposed on the surface of cells undergoing programmed cell death, possibly promoting activation of the complement system. This Homo sapiens (Human) protein is Complement C1q subcomponent subunit B.